A 160-amino-acid polypeptide reads, in one-letter code: Bcl-2-like gene 16 protein (160 aa).

Residues 64-84 (LLTTEHTTNWGKVVAMLSFSA) carry the BH1 motif.

Belongs to the Bcl-2 family.

The polypeptide is Bcl-2-like gene 16 protein (16) (Saimiri sciureus (Common squirrel monkey)).